The sequence spans 219 residues: Putative GEM-like protein 8 (219 aa).

The region spanning 96-174 (KIYKRLFKVS…CKINGVNQSQ (79 aa)) is the GRAM domain.

The protein belongs to the GEM family.

This Arabidopsis thaliana (Mouse-ear cress) protein is Putative GEM-like protein 8.